The chain runs to 3987 residues: Hybrid PKS-NRPS synthetase buaA (3987 aa).

The 434-residue stretch at 5-438 (NEPIAIVGSG…GANAHAIVES (434 aa)) folds into the Ketosynthase family 3 (KS3) domain. Catalysis depends on for beta-ketoacyl synthase activity residues cysteine 176, histidine 315, and histidine 358. The interval 546 to 872 (VFTGQGAQWP…RNADDVESFS (327 aa)) is malonyl-CoA:ACP transacylase (MAT) domain. Residues 939-1072 (HELLGVRVDS…GAVRLQLGAA (134 aa)) are N-terminal hotdog fold. Residues 939-1240 (HELLGVRVDS…VAPLVPVTQS (302 aa)) enclose the PKS/mFAS DH domain. A dehydratase (DH) domain region spans residues 940 to 1238 (ELLGVRVDSL…LQVAPLVPVT (299 aa)). The active-site Proton acceptor; for dehydratase activity is the histidine 970. The C-terminal hotdog fold stretch occupies residues 1087–1240 (MNDVNIEHFY…VAPLVPVTQS (154 aa)). Aspartate 1147 serves as the catalytic Proton donor; for dehydratase activity. The segment at 1399 to 1583 (YLANLVKQLS…TSTPSHDVFM (185 aa)) is methyltransferase (MT) domain. Residues 2113-2285 (TYLLVGLTGE…LPGSVMNLAG (173 aa)) are ketoreductase (KR) domain. The Carrier 1 domain occupies 2397–2473 (RVLTNGLILT…AMVEDTMERM (77 aa)). Position 2433 is an O-(pantetheine 4'-phosphoryl)serine (serine 2433). Positions 2489 to 2561 (AADRPSAPSD…PPPSSVMSED (73 aa)) are disordered. The span at 2514 to 2525 (HNSEEQESHAME) shows a compositional bias: basic and acidic residues. Residues 2532 to 2550 (STTSGGECSSTKESSSSEA) are compositionally biased toward low complexity. The interval 2582 to 3001 (MGYGSLQFFF…QLVKMCAYME (420 aa)) is condensation (C) domain. Positions 3042–3448 (LDVAQARPEA…GQLYYEGRIA (407 aa)) are adenylation (A) (KR) domain. A Carrier 2 domain is found at 3564–3644 (ADLSETELAL…AMALKIRNSQ (81 aa)). An O-(pantetheine 4'-phosphoryl)serine modification is found at serine 3604. Residues 3680–3916 (TVVLTGATGY…TGIAAAAVGA (237 aa)) form a reductase (R) domain region.

It in the C-terminal section; belongs to the NRP synthetase family.

It functions in the pathway mycotoxin biosynthesis. Its function is as follows. Hybrid PKS-NRPS synthetase; part of the gene cluster that mediates the biosynthesis of burnettramic acids, an unusual class of bolaamphiphilic pyrrolizidinediones that display potent antibacterial, antifungal, and cytotoxic activities. The first step of the biosynthesis of burnettramic acids is the hydroxylation of proline by the proline hydroxylase buaE to generate 4-hydroxyproline. The PKS-NRPS buaA and trans-enoyl reductase buaC construct the highly reduced polyketide chain, and the condensation (C) domain of buaA then catalyzes the amide bond formation with the activated 4-hydroxyproline. This is followed by the R domain releasing the nascent polyketide-peptide directly via a Dieckmann condensation to afford a tetramic acid fused to the hydroxyproline, generating the bicyclic pyrrolidinedione moiety. The cytochrome P450 monooxygenases buaD and buaG are likely responsible for the multiple hydroxylations on the polyketide chain and its terminus, although in a heterologous context, buaD does not appear to be required. Therefore, while buaG may be a multifunctional cytochrome P450 monooxygenase, it cannot be ruled out that the two secondary alcohols on the polyketide chain could have an acetate origin. Finally, the glycosyltransferase buaB transfers beta-D-mannose to the aglycone burnettramic acid A to form burnettramic acid A. Burnettramic acid B is a minor cis-pyrrolizidine epimer of burnettramic acid A and it is likely that small amounts of it form naturally in acidic environments. The sequence is that of Hybrid PKS-NRPS synthetase buaA from Petromyces alliaceus (Aspergillus alliaceus).